Reading from the N-terminus, the 92-residue chain is DNA-directed RNA polymerase subunit omega (92 aa).

Belongs to the RNA polymerase subunit omega family. The RNAP catalytic core consists of 2 alpha, 1 beta, 1 beta' and 1 omega subunit. When a sigma factor is associated with the core the holoenzyme is formed, which can initiate transcription.

The enzyme catalyses RNA(n) + a ribonucleoside 5'-triphosphate = RNA(n+1) + diphosphate. In terms of biological role, promotes RNA polymerase assembly. Latches the N- and C-terminal regions of the beta' subunit thereby facilitating its interaction with the beta and alpha subunits. In Shewanella oneidensis (strain ATCC 700550 / JCM 31522 / CIP 106686 / LMG 19005 / NCIMB 14063 / MR-1), this protein is DNA-directed RNA polymerase subunit omega.